The primary structure comprises 177 residues: Large ribosomal subunit protein uL5 (177 aa).

This sequence belongs to the universal ribosomal protein uL5 family. Part of the 50S ribosomal subunit; part of the 5S rRNA/L5/L18/L25 subcomplex. Contacts the 5S rRNA and the P site tRNA. Forms a bridge to the 30S subunit in the 70S ribosome.

Its function is as follows. This is one of the proteins that bind and probably mediate the attachment of the 5S RNA into the large ribosomal subunit, where it forms part of the central protuberance. In the 70S ribosome it contacts protein S13 of the 30S subunit (bridge B1b), connecting the 2 subunits; this bridge is implicated in subunit movement. Contacts the P site tRNA; the 5S rRNA and some of its associated proteins might help stabilize positioning of ribosome-bound tRNAs. This is Large ribosomal subunit protein uL5 from Anaplasma phagocytophilum (strain HZ).